The sequence spans 585 residues: Putative sulfur deprivation response regulator (585 aa).

The next 5 membrane-spanning stretches (helical) occupy residues 5 to 25 (VVDADVCLFAASTLLLLRGII), 30 to 50 (AFAGLANDSIVSIALMMMIAA), 83 to 103 (VASVSAVMNNTPLVAVMIPVV), 117 to 137 (FMMPLSYSAILGGLCTIIGTS), and 162 to 182 (IIGLPLTVAGGIYVVLFSPLL). RCK C-terminal domains follow at residues 189–274 (MMAA…LPGL) and 288–372 (ETVA…STEW). 5 helical membrane passes run 389-409 (LALFMSLGIFIALIVLNSMDV), 411-431 (PLSTTALVCLFAYLITGVLTV), 442-462 (ILLTVAGGFGVAKAMTVTGLA), 482-502 (VAAIYASTSLLTALLSNGAAV), and 561-581 (FGLPLQFVAALITVPICVLYF).

It belongs to the CitM (TC 2.A.11) transporter family.

It is found in the membrane. Functionally, not known; mutations in SAC1 produces cells that cannot synthesize arylsulfatase and cannot take up sulfate as rapidly as wild-type cells. SAC1 is necessary for cells to survive sulfur deprivation. The sequence is that of Putative sulfur deprivation response regulator (SAC1) from Chlamydomonas reinhardtii (Chlamydomonas smithii).